The sequence spans 166 residues: Lymphocyte antigen 6G6e (166 aa).

The signal sequence occupies residues 1–18; it reads MGPSSAFLGVLFLSGTLG. The UPAR/Ly6 domain maps to 28–151; the sequence is LRCYTCSFAK…PPPNLPLMTL (124 aa). 4 cysteine pairs are disulfide-bonded: cysteine 30-cysteine 52, cysteine 33-cysteine 39, cysteine 110-cysteine 129, and cysteine 130-cysteine 135.

As to quaternary structure, interacts with CHRNA4. O-glycosylated. Contains sialic acid residues.

Its subcellular location is the cell surface. It is found in the cell membrane. It localises to the cell projection. Believed to act as a modulator of nicotinic acetylcholine receptors (nAChRs) activity. In vitro potentiates alpha-3:beta-4-containing nAChRs maximum response by increasing peak current and slowing down receptor desensitization; the activity is dependent on its cell surface localization. The protein is Lymphocyte antigen 6G6e (Ly6g6e) of Mus musculus (Mouse).